A 332-amino-acid polypeptide reads, in one-letter code: Tetraacyldisaccharide 4'-kinase (332 aa).

Glycine 55–threonine 62 is an ATP binding site.

It belongs to the LpxK family.

It carries out the reaction a lipid A disaccharide + ATP = a lipid IVA + ADP + H(+). It participates in glycolipid biosynthesis; lipid IV(A) biosynthesis; lipid IV(A) from (3R)-3-hydroxytetradecanoyl-[acyl-carrier-protein] and UDP-N-acetyl-alpha-D-glucosamine: step 6/6. Its function is as follows. Transfers the gamma-phosphate of ATP to the 4'-position of a tetraacyldisaccharide 1-phosphate intermediate (termed DS-1-P) to form tetraacyldisaccharide 1,4'-bis-phosphate (lipid IVA). The polypeptide is Tetraacyldisaccharide 4'-kinase (Acidithiobacillus ferrooxidans (strain ATCC 53993 / BNL-5-31) (Leptospirillum ferrooxidans (ATCC 53993))).